We begin with the raw amino-acid sequence, 305 residues long: Homoserine O-acetyltransferase (305 aa).

The active-site Acyl-thioester intermediate is the Cys-142. Substrate is bound by residues Lys-163 and Ser-192. The active-site Proton acceptor is His-235. The active site involves Glu-237. Arg-249 lines the substrate pocket.

It belongs to the MetA family.

The protein localises to the cytoplasm. The enzyme catalyses L-homoserine + acetyl-CoA = O-acetyl-L-homoserine + CoA. It functions in the pathway amino-acid biosynthesis; L-methionine biosynthesis via de novo pathway; O-acetyl-L-homoserine from L-homoserine: step 1/1. Functionally, transfers an acetyl group from acetyl-CoA to L-homoserine, forming acetyl-L-homoserine. The sequence is that of Homoserine O-acetyltransferase from Dinoroseobacter shibae (strain DSM 16493 / NCIMB 14021 / DFL 12).